Consider the following 122-residue polypeptide: Phospholipase A2 crotoxin basic subunit CBb (122 aa).

7 disulfide bridges follow: Cys26-Cys115, Cys28-Cys44, Cys43-Cys95, Cys49-Cys122, Cys50-Cys88, Cys57-Cys81, and Cys75-Cys86. Ca(2+) is bound by residues Tyr27, Gly29, and Gly31. His47 is a catalytic residue. Asp48 contributes to the Ca(2+) binding site. Asp89 is an active-site residue.

This sequence belongs to the phospholipase A2 family. Group II subfamily. D49 sub-subfamily. As to quaternary structure, heterodimer of one of the acidic (CA1, CA2, CA3 or CA4) and one of the basic (CBa1, CBa2, CBb, CBc or CBd) subunits; non-covalently linked. The acidic subunit is non-toxic, without enzymatic activity and comprises 3 peptides that are cross-linked by 5 disulfide bridges. The basic subunit is toxic, has phospholipase A2 activity and is composed of a single chain. Multiple variants of each subunit give different crotoxin complexes that can be subdivided into 2 classes: (1) those of high toxicity, low PLA2 activity (CBb, CBc and CBd linked with high affinity to any CA) and high stability (K(d)=4.5 nM) and (2) those of moderate toxicity, high PLA2 activity (CBa2 linked with low affinity to any CA) and low stability (K(d)=25 nM). Ca(2+) serves as cofactor. Expressed by the venom gland.

The protein localises to the secreted. The catalysed reaction is a 1,2-diacyl-sn-glycero-3-phosphocholine + H2O = a 1-acyl-sn-glycero-3-phosphocholine + a fatty acid + H(+). Its function is as follows. Heterodimer CA-CB: Crotoxin is a potent presynaptic neurotoxin that possesses phospholipase A2 (PLA2) activity and exerts a lethal action by blocking neuromuscular transmission. It consists of a non-covalent association of a basic and weakly toxic PLA2 subunit (CBa2, CBb, CBc, or CBd), with a small acidic, non-enzymatic and non-toxic subunit (CA1, CA2, CA3 or CA4). The complex acts by binding to a specific 48-kDa protein (R48) receptor located on presynaptic membranes, forming a transient ternary complex CA-CB-R48, followed by dissociation of the CA-CB complex and release of the CA subunit. At equilibrium, only the CB subunits remain associated with the specific crotoxin receptor. In addition to neurotoxicity, crotoxin has been found to exert myotoxicity, nephrotoxicity, and cardiovascular toxicity. Moreover, anti-inflammatory, immunomodulatory, anti-tumor and analgesic effects of crotoxin have also been reported. Monomer CBb: The basic subunit of crotoxin is a snake venom phospholipase A2 (PLA2) that exhibits weak neurotoxicity (10-fold less than the heterodimer) and strong anticoagulant effects by binding to factor Xa (F10) and inhibiting the prothrombinase activity. In addition, it shows the same effects described for the heterodimer and binds the nucleotide-binding domain (NBD1) of CFTR chloride channels and increases the channel current. PLA2 catalyzes the calcium-dependent hydrolysis of the 2-acyl groups in 3-sn-phosphoglycerides. The polypeptide is Phospholipase A2 crotoxin basic subunit CBb (Crotalus durissus terrificus (South American rattlesnake)).